Here is a 96-residue protein sequence, read N- to C-terminus: U-reduvitoxin-Pr12a (96 aa).

Positions 1–20 (MKTALLLFFALVFIAFETEA) are cleaved as a signal peptide. 3 cysteine pairs are disulfide-bonded: cysteine 21-cysteine 38, cysteine 33-cysteine 53, and cysteine 36-cysteine 47. Pacifastin domains lie at 21–55 (CRPG…ICPP) and 59–94 (KLEC…CIHK). The tract at residues 54 to 56 (PPR) is pro-Pro-Arg motif necessary for proteolytic processing. Disulfide bonds link cysteine 62-cysteine 77, cysteine 72-cysteine 91, and cysteine 75-cysteine 86.

Belongs to the protease inhibitor I19 family. As to expression, expressed by the venom gland.

The protein localises to the secreted. Functionally, inhibits trypsin activity and prophenoloxidase (PPO) activation, an enzyme essential for both clotting and insect innate immune responses. It does not inhibit activity of chymotrypsin and protease K, and has no effect on phenoloxidase (PO) activity. The sequence is that of U-reduvitoxin-Pr12a from Platymeris rhadamanthus (Red spot assassin bug).